Here is an 89-residue protein sequence, read N- to C-terminus: Small ribosomal subunit protein uS15 (89 aa).

The protein belongs to the universal ribosomal protein uS15 family. Part of the 30S ribosomal subunit. Forms a bridge to the 50S subunit in the 70S ribosome, contacting the 23S rRNA.

Functionally, one of the primary rRNA binding proteins, it binds directly to 16S rRNA where it helps nucleate assembly of the platform of the 30S subunit by binding and bridging several RNA helices of the 16S rRNA. Its function is as follows. Forms an intersubunit bridge (bridge B4) with the 23S rRNA of the 50S subunit in the ribosome. This chain is Small ribosomal subunit protein uS15, found in Pseudomonas putida (strain GB-1).